The primary structure comprises 965 residues: Iron-responsive element-binding protein 2 (965 aa).

Residues Asn142–Cys170 are disordered. Residues Cys514, Cys580, and Cys583 each coordinate [4Fe-4S] cluster.

Belongs to the aconitase/IPM isomerase family. It depends on [4Fe-4S] cluster as a cofactor. Post-translationally, ubiquitinated and degraded by the proteasome in presence of high level of iron and oxygen.

Its subcellular location is the cytoplasm. Its function is as follows. RNA-binding protein that binds to iron-responsive elements (IRES), which are stem-loop structures found in the 5'-UTR of ferritin, and delta aminolevulinic acid synthase mRNAs, and in the 3'-UTR of transferrin receptor mRNA. Binding to the IRE element in ferritin results in the repression of its mRNA translation. Binding of the protein to the transferrin receptor mRNA inhibits the degradation of this otherwise rapidly degraded mRNA. This is Iron-responsive element-binding protein 2 (IREB2) from Gallus gallus (Chicken).